A 230-amino-acid polypeptide reads, in one-letter code: MAKHGKRYLEAAKKVDSTKFYSVDEAMKLAKETSYANFDATIEVAYNLSVDPKQADQQIRGALVLPNGTGKSKKVVVFAEGPQADQAKEAGADEVGSDDLVEKVQNGYLDFDVVIATPMMMAKVGRLGRILGPKGLMPNPKTGTVTMDVAKAVENQKAGQVEYRVDKQGLIHAPIGKASFDADKLAQNFDALRDVILRARPASAKGQYIKSVAVSATFGPGIHLDPLNLD.

The protein belongs to the universal ribosomal protein uL1 family. As to quaternary structure, part of the 50S ribosomal subunit.

In terms of biological role, binds directly to 23S rRNA. The L1 stalk is quite mobile in the ribosome, and is involved in E site tRNA release. Its function is as follows. Protein L1 is also a translational repressor protein, it controls the translation of the L11 operon by binding to its mRNA. The chain is Large ribosomal subunit protein uL1 from Lactobacillus gasseri (strain ATCC 33323 / DSM 20243 / BCRC 14619 / CIP 102991 / JCM 1131 / KCTC 3163 / NCIMB 11718 / NCTC 13722 / AM63).